Consider the following 837-residue polypeptide: MEPAAGGPGPLIVNNKQPQPPPPPPPATAQPPPGAPRAGAGLLPGGKAREFNRNQRKDSEGYSESPDLEFEYADTDKWAAELSELYSYTEGPEFLMNRKCFEEDFRIHVTDKKWTELDTNQHRTHAMRLLDGLEVTAREKRLKVARAILYVAQGTFGECSSEAEVQSWMRYNIFLLLEVGTFNALVELLNMEIDNSAACSSAVRKPAISLADSTDLRVLLNIMYLIVETVHQECEGDKAEWRTMRQTFRAELGSPLYNSEPFAIMLFGMVTKFCSGHAPHFPMKKVLLLLWKTVLCTLGGFEELQSMKAEKRSILGLPPLPEDSIKVIRNMRAASPPASASDLIEQQQKRGRREHKALIKQDNLDAFNERDPYKADDSREEEEENDDDNSLEGETFPLERDEVMPPPLQHPQTDRLTCPKGLPWAPKVREKDIEMFLESSRSKFIGYTLGSDTNTVVGLPRPIHESIKTLKQHKYTSIAEVQAQMEEEYLRSPLSGGEEEVEQVPAETLYQGLLPSLPQYMIALLKILLAAAPTSKAKTDSINILADVLPEEMPTTVLQSMKLGVDVNRHKEVIVKAISAVLLLLLKHFKLNHVYQFEYMAQHLVFANCIPLILKFFNQNIMSYITAKNSISVLDYPHCVVHELPELTAESLEAGDSNQFCWRNLFSCINLLRILNKLTKWKHSRTMMLVVFKSAPILKRALKVKQAMMQLYVLKLLKVQTKYLGRQWRKSNMKTMSAIYQKVRHRLNDDWAYGNDLDARPWDFQAEECALRANIERFNARRYDRAHSNPDFLPVDNCLQSVLGQRVDLPEDFQMNYDLWLEREVFSKPISWEELLQ.

Met-1 bears the N-acetylmethionine mark. Disordered stretches follow at residues 1–66 (MEPA…SESP) and 333–423 (AASP…KGLP). The segment covering 18–35 (PQPPPPPPPATAQPPPGA) has biased composition (pro residues). Residues 47 to 60 (KAREFNRNQRKDSE) are compositionally biased toward basic and acidic residues. Ser-59, Ser-335, and Ser-339 each carry phosphoserine. The segment covering 356 to 377 (KALIKQDNLDAFNERDPYKADD) has biased composition (basic and acidic residues). Positions 378 to 391 (SREEEEENDDDNSL) are enriched in acidic residues. Ser-788 carries the post-translational modification Phosphoserine. The tract at residues 796-837 (DNCLQSVLGQRVDLPEDFQMNYDLWLEREVFSKPISWEELLQ) is required for STRIPAK core complex formation.

The protein belongs to the STRIP family. In terms of assembly, part of the core of STRIPAK complexes composed of PP2A catalytic and scaffolding subunits, the striatins (PP2A regulatory subunits), the striatin-associated proteins MOB4, STRIP1 and STRIP2, PDCD10 and members of the STE20 kinases, such as STK24 and STK26. The STRIPAK complex can be extended by adapter proteins such as SLMAP:SIKE1, CTTNBP2 or CTTNBP2NL. Interacts with CDC42BPB. Interacts with CTTNBP2NL.

It is found in the cytoplasm. Functionally, plays a role in the regulation of cell morphology and cytoskeletal organization. Required in the cortical actin filament dynamics and cell shape. Part of the striatin-interacting phosphatase and kinase (STRIPAK) complexes. STRIPAK complexes have critical roles in protein (de)phosphorylation and are regulators of multiple signaling pathways including Hippo, MAPK, nuclear receptor and cytoskeleton remodeling. Different types of STRIPAK complexes are involved in a variety of biological processes such as cell growth, differentiation, apoptosis, metabolism and immune regulation. This chain is Striatin-interacting protein 1 (STRIP1), found in Macaca fascicularis (Crab-eating macaque).